The primary structure comprises 241 residues: Nickel import ATP-binding protein LarO (241 aa).

Residues 2 to 240 (IKLVNICYDY…QPARQAQLMT (239 aa)) enclose the ABC transporter domain. 34-41 (GPNGSGKS) contacts ATP.

The protein belongs to the ABC transporter superfamily. May form an energy-coupling factor (ECF) transporter complex composed of an ATP-binding protein (A component, LarO), a transmembrane protein (T component, LarQ) and a fused possible substrate-capture protein (S component, LarMN) of unknown stoichiometry.

It is found in the cell membrane. Probable ATP-binding component of the energy-coupling factor (ECF) transporter complex LarMNQO involved in nickel import. LarO is presumably responsible for energy coupling to the transport system. In Lactiplantibacillus plantarum (strain ATCC BAA-793 / NCIMB 8826 / WCFS1) (Lactobacillus plantarum), this protein is Nickel import ATP-binding protein LarO.